The following is a 591-amino-acid chain: NADH-quinone oxidoreductase subunit C/D (591 aa).

Residues 1–182 (MVTVVENTDP…TPYFLNTAKQ (182 aa)) are NADH dehydrogenase I subunit C. The tract at residues 206–591 (DFMFLNIGPN…IDIVMADCDR (386 aa)) is NADH dehydrogenase I subunit D.

It in the N-terminal section; belongs to the complex I 30 kDa subunit family. This sequence in the C-terminal section; belongs to the complex I 49 kDa subunit family. NDH-1 is composed of 13 different subunits. Subunits NuoB, CD, E, F, and G constitute the peripheral sector of the complex.

The protein localises to the cell inner membrane. The catalysed reaction is a quinone + NADH + 5 H(+)(in) = a quinol + NAD(+) + 4 H(+)(out). In terms of biological role, NDH-1 shuttles electrons from NADH, via FMN and iron-sulfur (Fe-S) centers, to quinones in the respiratory chain. The immediate electron acceptor for the enzyme in this species is believed to be ubiquinone. Couples the redox reaction to proton translocation (for every two electrons transferred, four hydrogen ions are translocated across the cytoplasmic membrane), and thus conserves the redox energy in a proton gradient. The chain is NADH-quinone oxidoreductase subunit C/D from Psychrobacter cryohalolentis (strain ATCC BAA-1226 / DSM 17306 / VKM B-2378 / K5).